A 319-amino-acid chain; its full sequence is Cytochrome f (319 aa).

The signal sequence occupies residues 1–35; sequence MQNRNISYWIKKCVIQSISIVILMKIIAWPSISEA. Heme contacts are provided by Tyr-36, Cys-56, Cys-59, and His-60. Residues 285–305 form a helical membrane-spanning segment; it reads VQSLLVFFVSVTLAQIFLVLK.

Belongs to the cytochrome f family. The 4 large subunits of the cytochrome b6-f complex are cytochrome b6, subunit IV (17 kDa polypeptide, petD), cytochrome f and the Rieske protein, while the 4 small subunits are PetG, PetL, PetM and PetN. The complex functions as a dimer. Requires heme as cofactor.

The protein resides in the plastid. Its subcellular location is the chloroplast thylakoid membrane. Component of the cytochrome b6-f complex, which mediates electron transfer between photosystem II (PSII) and photosystem I (PSI), cyclic electron flow around PSI, and state transitions. The chain is Cytochrome f from Physcomitrium patens (Spreading-leaved earth moss).